The sequence spans 384 residues: Putative F-box/kelch-repeat protein At3g27910 (384 aa).

The F-box domain occupies 27 to 79 (SPTSLPLPDEIIVNCFAYIPRCDYPSLSLVSKTFNRLITSIELNIVRSLFQRT). 4 Kelch repeats span residues 138–184 (KIYV…IVDG), 185–235 (KIYV…VMNK), 237–274 (IYIM…VIDN), and 275–323 (MLYT…MANH).

The sequence is that of Putative F-box/kelch-repeat protein At3g27910 from Arabidopsis thaliana (Mouse-ear cress).